We begin with the raw amino-acid sequence, 300 residues long: Ribosomal RNA small subunit methyltransferase H (300 aa).

S-adenosyl-L-methionine is bound by residues 38–40, E55, I85, D102, and H109; that span reads GGH.

Belongs to the methyltransferase superfamily. RsmH family.

It localises to the cytoplasm. It carries out the reaction cytidine(1402) in 16S rRNA + S-adenosyl-L-methionine = N(4)-methylcytidine(1402) in 16S rRNA + S-adenosyl-L-homocysteine + H(+). Functionally, specifically methylates the N4 position of cytidine in position 1402 (C1402) of 16S rRNA. This chain is Ribosomal RNA small subunit methyltransferase H, found in Brachyspira hyodysenteriae (strain ATCC 49526 / WA1).